The primary structure comprises 374 residues: S-adenosylmethionine synthase 2 (374 aa).

Mg(2+) is bound at residue Glu-11. An ATP-binding site is contributed by His-17. Glu-45 lines the K(+) pocket. L-methionine is bound by residues Glu-58 and Gln-101. Residues 169 to 171 (DGK), 237 to 240 (SGRF), Asp-248, 254 to 255 (RK), Ala-271, Lys-275, and Lys-279 each bind ATP. Residue Asp-248 coordinates L-methionine. Residue Lys-279 coordinates L-methionine.

Belongs to the AdoMet synthase family. Homotetramer. Requires Mn(2+) as cofactor. Mg(2+) serves as cofactor. The cofactor is Co(2+). It depends on K(+) as a cofactor. Expressed in vegetative and reproductive tissues.

The protein localises to the cytoplasm. It catalyses the reaction L-methionine + ATP + H2O = S-adenosyl-L-methionine + phosphate + diphosphate. It participates in amino-acid biosynthesis; S-adenosyl-L-methionine biosynthesis; S-adenosyl-L-methionine from L-methionine: step 1/1. In terms of biological role, catalyzes the formation of S-adenosylmethionine from methionine and ATP. The reaction comprises two steps that are both catalyzed by the same enzyme: formation of S-adenosylmethionine (AdoMet) and triphosphate, and subsequent hydrolysis of the triphosphate. In Pisum sativum (Garden pea), this protein is S-adenosylmethionine synthase 2 (SAMS2).